Reading from the N-terminus, the 122-residue chain is Large ribosomal subunit protein uL14 (122 aa).

This sequence belongs to the universal ribosomal protein uL14 family. As to quaternary structure, part of the 50S ribosomal subunit. Forms a cluster with proteins L3 and L19. In the 70S ribosome, L14 and L19 interact and together make contacts with the 16S rRNA in bridges B5 and B8.

Its function is as follows. Binds to 23S rRNA. Forms part of two intersubunit bridges in the 70S ribosome. The protein is Large ribosomal subunit protein uL14 of Corynebacterium glutamicum (strain R).